A 312-amino-acid polypeptide reads, in one-letter code: Regulation of nuclear pre-mRNA domain-containing protein 1A (312 aa).

The residue at position 2 (Ser2) is an N-acetylserine. The 132-residue stretch at Ser2–Lys133 folds into the CID domain. Ser153, Ser156, and Ser285 each carry phosphoserine. Residues Leu244 to Leu286 are a coiled coil.

It belongs to the UPF0400 (RTT103) family. As to quaternary structure, may form a heterodimer with RPRD1B. Associates with the RNA polymerase II subunit POLR2A (via CTD phosphorylated at 'Ser-2' and 'Ser-7' of the heptad repeats).

It localises to the nucleus. Its function is as follows. Interacts with phosphorylated C-terminal heptapeptide repeat domain (CTD) of the largest RNA polymerase II subunit POLR2A, and participates in dephosphorylation of the CTD by RPAP2. May act as a negative regulator of cyclin-D1 (CCND1) and cyclin-E (CCNE1) in the cell cycle. The sequence is that of Regulation of nuclear pre-mRNA domain-containing protein 1A (RPRD1A) from Pongo abelii (Sumatran orangutan).